The chain runs to 325 residues: ATP phosphoribosyltransferase (325 aa).

It belongs to the ATP phosphoribosyltransferase family. Long subfamily. The cofactor is Mg(2+).

Its subcellular location is the cytoplasm. The catalysed reaction is 1-(5-phospho-beta-D-ribosyl)-ATP + diphosphate = 5-phospho-alpha-D-ribose 1-diphosphate + ATP. Its pathway is amino-acid biosynthesis; L-histidine biosynthesis; L-histidine from 5-phospho-alpha-D-ribose 1-diphosphate: step 1/9. Feedback inhibited by histidine. Its function is as follows. Catalyzes the condensation of ATP and 5-phosphoribose 1-diphosphate to form N'-(5'-phosphoribosyl)-ATP (PR-ATP). Has a crucial role in the pathway because the rate of histidine biosynthesis seems to be controlled primarily by regulation of HisG enzymatic activity. The sequence is that of ATP phosphoribosyltransferase from Bradyrhizobium sp. (strain ORS 278).